The primary structure comprises 85 residues: Large ribosomal subunit protein bL27 (85 aa).

This sequence belongs to the bacterial ribosomal protein bL27 family.

The polypeptide is Large ribosomal subunit protein bL27 (Ruthia magnifica subsp. Calyptogena magnifica).